A 150-amino-acid chain; its full sequence is Viral late gene transcription factor 2 (150 aa).

It belongs to the orthopoxvirus VLTF-2/OPG126 family. Interacts with itself. Interacts with the late transcription factors VLTF-1/OPG093.

Acts with RNA polymerase to initiate transcription from late gene promoters. The sequence is that of Viral late gene transcription factor 2 (OPG126) from Vaccinia virus (strain Western Reserve) (VACV).